A 545-amino-acid chain; its full sequence is Adenine deaminase (545 aa).

Belongs to the metallo-dependent hydrolases superfamily. Adenine deaminase family. Mn(2+) is required as a cofactor.

It carries out the reaction adenine + H2O + H(+) = hypoxanthine + NH4(+). The sequence is that of Adenine deaminase from Salinibacter ruber (strain DSM 13855 / M31).